The chain runs to 332 residues: L-lactate dehydrogenase A chain (332 aa).

Residues G29 to K57 and R99 each bind NAD(+). Residues R106, N138, and R169 each coordinate substrate. N138 provides a ligand contact to NAD(+). H193 serves as the catalytic Proton acceptor. T248 is a substrate binding site.

Belongs to the LDH/MDH superfamily. LDH family. In terms of assembly, homotetramer.

The protein localises to the cytoplasm. It carries out the reaction (S)-lactate + NAD(+) = pyruvate + NADH + H(+). It functions in the pathway fermentation; pyruvate fermentation to lactate; (S)-lactate from pyruvate: step 1/1. In terms of biological role, interconverts simultaneously and stereospecifically pyruvate and lactate with concomitant interconversion of NADH and NAD(+). In Sceloporus undulatus (Eastern fence lizard), this protein is L-lactate dehydrogenase A chain (LDHA).